We begin with the raw amino-acid sequence, 168 residues long: Photosystem I assembly protein Ycf3 (168 aa).

TPR repeat units lie at residues 35–68, 72–105, and 120–153; these read AFTY…EIDP, SYIL…NPFL, and GEQA…TPGN.

It belongs to the Ycf3 family.

Its subcellular location is the plastid. The protein resides in the chloroplast thylakoid membrane. Essential for the assembly of the photosystem I (PSI) complex. May act as a chaperone-like factor to guide the assembly of the PSI subunits. This is Photosystem I assembly protein Ycf3 from Drimys granadensis.